The following is a 504-amino-acid chain: NADH-quinone oxidoreductase subunit N (504 aa).

14 helical membrane passes run 9-29 (IALLPIIVIGITIVGIMLSII), 38-58 (AVLTIIGMIIASVSSLLHMMW), 78-98 (VLYVILIMFVGIASSILGYVW), 114-134 (LLIASIGGILLVITNHLIVLF), 135-155 (LGIELISISICGLISYPVFSK), 164-184 (YIILSGVSSSFLLFGIVFIYC), 216-236 (IVIGLSMMMIGMGFKLSCVPF), 254-274 (YLATGSKIAVTAVLMRFLLIL), 282-302 (LHIFLSVSACCSMLFGSLMAI), 309-329 (RMLAYSSITNAGYLLIALIAL), 341-361 (ISVYLVSYLFANVGVWGIVNI), 392-412 (VIFVIAILSLAGIPMTFGFIG), 425-447 (LWFLTVMMIISSIISMFYYLKII), and 476-496 (FMVIIVAIIILFFGVYPQFIV).

Belongs to the complex I subunit 2 family. In terms of assembly, NDH-1 is composed of 13 different subunits. Subunits NuoA, H, J, K, L, M, N constitute the membrane sector of the complex.

The protein resides in the cell inner membrane. The enzyme catalyses a quinone + NADH + 5 H(+)(in) = a quinol + NAD(+) + 4 H(+)(out). In terms of biological role, NDH-1 shuttles electrons from NADH, via FMN and iron-sulfur (Fe-S) centers, to quinones in the respiratory chain. The immediate electron acceptor for the enzyme in this species is believed to be ubiquinone. Couples the redox reaction to proton translocation (for every two electrons transferred, four hydrogen ions are translocated across the cytoplasmic membrane), and thus conserves the redox energy in a proton gradient. In Blochmanniella floridana, this protein is NADH-quinone oxidoreductase subunit N.